The chain runs to 216 residues: MNAPRFAAPARRTKKLPPLRVGIGGPVGSGKTTLLEMLCKGMRERYDLVAITNDIYTKEDQRLLTIAGALPEARIMGVETGGCPHTAIREDASINLEAVERMLARFPDADIVFIESGGDNLAATFSPELSDLTIYVIDVAGGEKIPRKGGPGITKSDLLVINKTDLAPLVGANLEVMASDTRKMRGERPYVMCNLKALDGVADVIAFIENKGLLTV.

A GTP-binding site is contributed by 25–32; it reads GPVGSGKT.

Belongs to the SIMIBI class G3E GTPase family. UreG subfamily. As to quaternary structure, homodimer. UreD, UreF and UreG form a complex that acts as a GTP-hydrolysis-dependent molecular chaperone, activating the urease apoprotein by helping to assemble the nickel containing metallocenter of UreC. The UreE protein probably delivers the nickel.

It localises to the cytoplasm. In terms of biological role, facilitates the functional incorporation of the urease nickel metallocenter. This process requires GTP hydrolysis, probably effectuated by UreG. This chain is Urease accessory protein UreG, found in Burkholderia mallei (strain NCTC 10247).